The chain runs to 151 residues: Ribosome maturation factor RimP (151 aa).

The protein belongs to the RimP family.

Its subcellular location is the cytoplasm. Its function is as follows. Required for maturation of 30S ribosomal subunits. The sequence is that of Ribosome maturation factor RimP from Mannheimia succiniciproducens (strain KCTC 0769BP / MBEL55E).